A 478-amino-acid chain; its full sequence is Glycogen synthase (478 aa).

ADP-alpha-D-glucose is bound at residue Lys15.

This sequence belongs to the glycosyltransferase 1 family. Bacterial/plant glycogen synthase subfamily.

It carries out the reaction [(1-&gt;4)-alpha-D-glucosyl](n) + ADP-alpha-D-glucose = [(1-&gt;4)-alpha-D-glucosyl](n+1) + ADP + H(+). It participates in glycan biosynthesis; glycogen biosynthesis. In terms of biological role, synthesizes alpha-1,4-glucan chains using ADP-glucose. This is Glycogen synthase from Acholeplasma laidlawii (strain PG-8A).